The following is a 346-amino-acid chain: D-alanine--D-alanine ligase (346 aa).

The region spanning 134-340 (KFLAESLGVK…IDYTYIHSIQ (207 aa)) is the ATP-grasp domain. 161–212 (EYPVIIKPVRLGSSIGVSIVKSEAELDYALDVAFEFDNDVIVEPFIDGVKEF) contributes to the ATP binding site. Mg(2+) is bound by residues Asp-284, Glu-296, and Asn-298.

This sequence belongs to the D-alanine--D-alanine ligase family. The cofactor is Mg(2+). Requires Mn(2+) as cofactor.

It is found in the cytoplasm. The catalysed reaction is 2 D-alanine + ATP = D-alanyl-D-alanine + ADP + phosphate + H(+). Its pathway is cell wall biogenesis; peptidoglycan biosynthesis. In terms of biological role, cell wall formation. The sequence is that of D-alanine--D-alanine ligase from Sulfurovum sp. (strain NBC37-1).